Here is a 524-residue protein sequence, read N- to C-terminus: GMP synthase [glutamine-hydrolyzing] (524 aa).

The Glutamine amidotransferase type-1 domain maps to 5 to 195; it reads KVIVIDFGGQ…VRGVCGCAGT (191 aa). C82 (nucleophile) is an active-site residue. Catalysis depends on residues H169 and E171. Residues 196–389 form the GMPS ATP-PPase domain; the sequence is WKMDAFVENT…LGIPEHLVFR (194 aa). Residue 223–229 participates in ATP binding; the sequence is SGGVDSS.

In terms of assembly, homodimer.

It carries out the reaction XMP + L-glutamine + ATP + H2O = GMP + L-glutamate + AMP + diphosphate + 2 H(+). Its pathway is purine metabolism; GMP biosynthesis; GMP from XMP (L-Gln route): step 1/1. Functionally, catalyzes the synthesis of GMP from XMP. This chain is GMP synthase [glutamine-hydrolyzing], found in Lachnospira eligens (strain ATCC 27750 / DSM 3376 / VPI C15-48 / C15-B4) (Eubacterium eligens).